A 200-amino-acid chain; its full sequence is Recombination protein RecR (200 aa).

The C4-type zinc finger occupies 58-73 (CQVCGNMDTENICGIC). One can recognise a Toprim domain in the interval 81-176 (SVIAIVETVA…KISRLASGIP (96 aa)).

It belongs to the RecR family.

In terms of biological role, may play a role in DNA repair. It seems to be involved in an RecBC-independent recombinational process of DNA repair. It may act with RecF and RecO. This chain is Recombination protein RecR, found in Rickettsia bellii (strain OSU 85-389).